The sequence spans 241 residues: Triosephosphate isomerase (241 aa).

9–11 (NWK) is a substrate binding site. His-96 serves as the catalytic Electrophile. The active-site Proton acceptor is the Glu-165. Substrate-binding positions include Gly-171, Ser-204, and 225–226 (GG).

It belongs to the triosephosphate isomerase family. As to quaternary structure, homodimer.

Its subcellular location is the cytoplasm. It carries out the reaction D-glyceraldehyde 3-phosphate = dihydroxyacetone phosphate. The protein operates within carbohydrate biosynthesis; gluconeogenesis. It participates in carbohydrate degradation; glycolysis; D-glyceraldehyde 3-phosphate from glycerone phosphate: step 1/1. In terms of biological role, involved in the gluconeogenesis. Catalyzes stereospecifically the conversion of dihydroxyacetone phosphate (DHAP) to D-glyceraldehyde-3-phosphate (G3P). The polypeptide is Triosephosphate isomerase (Acaryochloris marina (strain MBIC 11017)).